The following is a 713-amino-acid chain: Cadherin-13 (713 aa).

Positions 1 to 22 (MQPATPLVLCVLLSQVLLLTSA) are cleaved as a signal peptide. Residues 23–138 (EDLDCTPGFQ…RTSPVPRQKR (116 aa)) constitute a propeptide that is removed on maturation. 2 N-linked (GlcNAc...) asparagine glycosylation sites follow: Asn-52 and Asn-86. 5 consecutive Cadherin domains span residues 139–245 (SIVV…RPIF), 246–363 (REGP…SPKF), 364–477 (TKKE…SPVF), 478–585 (YPDP…APFI), and 584–694 (FIYP…AAGA). A disordered region spans residues 156–178 (PRDVGKVVDSDRPEGSKFRLTGK). A compositionally biased stretch (basic and acidic residues) spans 158–172 (DVGKVVDSDRPEGSK). N-linked (GlcNAc...) asparagine glycosylation is found at Asn-382, Asn-489, Asn-500, Asn-530, Asn-598, Asn-638, and Asn-671. Residue Gly-693 is the site of GPI-anchor amidated glycine attachment. Positions 694–713 (APHFSAATALLLSLFSLARL) are cleaved as a propeptide — removed in mature form.

In terms of assembly, by contrast to classical cadherins, homodimerization in trans is not mediated by cadherin EC1 domain strand-swapping, but instead through a homophilic adhesive interface which joins two elongated EC1-EC2 domains through a region near their Ca2+-binding sites to form a tetrahedral, X-like shape.

The protein localises to the cell membrane. The protein resides in the cytoplasm. Functionally, cadherins are calcium-dependent cell adhesion proteins. They preferentially interact with themselves in a homophilic manner in connecting cells; cadherins may thus contribute to the sorting of heterogeneous cell types. May act as a negative regulator of neural cell growth. The protein is Cadherin-13 (CDH13) of Bos taurus (Bovine).